Consider the following 337-residue polypeptide: Large ribosomal subunit protein uL3 (337 aa).

A disordered region spans residues 1 to 26 (MTRHHQPRKGSVAFSPRKRVARETPR).

The protein belongs to the universal ribosomal protein uL3 family. Part of the 50S ribosomal subunit. Forms a cluster with proteins L14 and L24e.

In terms of biological role, one of the primary rRNA binding proteins, it binds directly near the 3'-end of the 23S rRNA, where it nucleates assembly of the 50S subunit. This chain is Large ribosomal subunit protein uL3, found in Methanosphaera stadtmanae (strain ATCC 43021 / DSM 3091 / JCM 11832 / MCB-3).